The following is a 291-amino-acid chain: Glycine--tRNA ligase alpha subunit (291 aa).

Belongs to the class-II aminoacyl-tRNA synthetase family. In terms of assembly, tetramer of two alpha and two beta subunits.

It is found in the cytoplasm. It carries out the reaction tRNA(Gly) + glycine + ATP = glycyl-tRNA(Gly) + AMP + diphosphate. The polypeptide is Glycine--tRNA ligase alpha subunit (Coprothermobacter proteolyticus (strain ATCC 35245 / DSM 5265 / OCM 4 / BT)).